The chain runs to 1167 residues: Phenyloxazoline synthase MbtB (1167 aa).

Positions 2 to 78 (EAVVTSSQTV…AWTRLVGERT (77 aa)) constitute a Carrier 1 domain. S39 is subject to O-(pantetheine 4'-phosphoryl)serine. Residues 78-100 (TAESPGAATQSGDTAASAGDPDA) form a disordered region. Positions 98-390 (PDAPFPLAPI…SSLMLDVDFT (293 aa)) are condensation/cyclization. The tract at residues 575-967 (TYAELRERVL…RIAGVEAAVA (393 aa)) is adenylation. Residues 1054–1130 (VPSTALERAL…ALARRLVDHE (77 aa)) form the Carrier 2 domain. S1089 is modified (O-(pantetheine 4'-phosphoryl)serine).

The protein belongs to the ATP-dependent AMP-binding enzyme family. MbtB subfamily. The cofactor is pantetheine 4'-phosphate. Post-translationally, 4'-phosphopantetheine is transferred from CoA to a specific serine in each of the two carrier protein domains, leading to their activation from apo to holo forms.

Its pathway is siderophore biosynthesis; mycobactin biosynthesis. Involved in the initial steps of the mycobactin biosynthetic pathway. Putatively couples activated salicylic acid with serine or threonine and cyclizes this precursor to the hydroxyphenyloxazoline ring system present in this class of siderophores. In Mycobacterium sp. (strain MCS), this protein is Phenyloxazoline synthase MbtB (mbtB).